Reading from the N-terminus, the 676-residue chain is MTAPRSRAPTTRARGDTEALCSPEDGWVKVHPSPGTMLFREILHGQLGYTEGQGVYNVVRSSEATTRQLQAAIFHALLNATTYRDLEADWLGHVAARGLQPQRLVRRYRNAREADIAGVAERVFDTWRNTLRTTLLDFAHGLVACFAPGGPSGPSSFPKYIDWLTCLGLVPILRKRQEGGVTQGLRAFLKQHPLTRQLATVAEAAERAGPGFFELALAFDSTRVADYDRVYIYYNHRRGDWLVRDPISGQRGECLVLWPPLWTGDRLVFDSPVQRLFPEIVACHSLREHAHVCRLRNTASVKVLLGRKSDSERGVAGAARVVNKVLGEDDETKAGSAASRLVRLIINMKGMRHVGDINDTVRSYLDEAGGHLIDAPAVDGTLPGFGKGGNSRGSAGQDQGGRAPQLRQAFRTAVVNNINGVLEGYINNLFGTIERLRETNAGLATQLQERDRELRRATAGALERQQRAADLAAESVTGGCGSRPAGADLLRADYDIIDVSKSMDDDTYVANSFQHPYIPSYAQDLERLSRLWEHELVRCFKILCHRNNQGQETSISYSSGAIAAFVAPYFESVLRAPRVGAPITGSDVILGEEELWDAVFKKTRLQTYLTDIAALFVADVQHAALPPPPSPVGADFRPGASPRGRSRSRSPGRTARGAPDQGGGIGHRDGRRDGRR.

The interval 383–404 (PGFGKGGNSRGSAGQDQGGRAP) is disordered. The tract at residues 422 to 443 (LEGYINNLFGTIERLRETNAGL) is putative leucine zipper motif. The interval 627 to 676 (PPPSPVGADFRPGASPRGRSRSRSPGRTARGAPDQGGGIGHRDGRRDGRR) is disordered. The span at 666–676 (GHRDGRRDGRR) shows a compositional bias: basic and acidic residues.

It belongs to the herpesviridae portal protein family. In terms of assembly, homododecamerizes. Interacts with terminase subunits TRM1 and TRM3.

It is found in the virion. Its subcellular location is the host nucleus. In terms of biological role, forms a portal in the viral capsid through which viral DNA is translocated during DNA packaging. Assembles as a dodecamer at a single fivefold axe of the T=16 icosahedric capsid. Binds to the molecular motor that translocates the viral DNA, termed terminase. In Human herpesvirus 1 (strain 17) (HHV-1), this protein is Portal protein (UL6).